The primary structure comprises 387 residues: Deoxyguanosinetriphosphate triphosphohydrolase-like protein (387 aa).

In terms of domain architecture, HD spans R78–N209.

Belongs to the dGTPase family. Type 2 subfamily.

This is Deoxyguanosinetriphosphate triphosphohydrolase-like protein from Ralstonia nicotianae (strain ATCC BAA-1114 / GMI1000) (Ralstonia solanacearum).